The primary structure comprises 205 residues: dITP/XTP pyrophosphatase (205 aa).

11–16 lines the substrate pocket; that stretch reads TKNMGK. Mg(2+) is bound by residues glutamate 44 and aspartate 73. Aspartate 73 acts as the Proton acceptor in catalysis. Substrate contacts are provided by residues serine 74, 158–161, lysine 181, and 186–187; these read FGYD and HR.

It belongs to the HAM1 NTPase family. In terms of assembly, homodimer. The cofactor is Mg(2+).

The catalysed reaction is XTP + H2O = XMP + diphosphate + H(+). It carries out the reaction dITP + H2O = dIMP + diphosphate + H(+). The enzyme catalyses ITP + H2O = IMP + diphosphate + H(+). Functionally, pyrophosphatase that catalyzes the hydrolysis of nucleoside triphosphates to their monophosphate derivatives, with a high preference for the non-canonical purine nucleotides XTP (xanthosine triphosphate), dITP (deoxyinosine triphosphate) and ITP. Seems to function as a house-cleaning enzyme that removes non-canonical purine nucleotides from the nucleotide pool, thus preventing their incorporation into DNA/RNA and avoiding chromosomal lesions. The protein is dITP/XTP pyrophosphatase of Bacillus thuringiensis subsp. konkukian (strain 97-27).